Here is a 349-residue protein sequence, read N- to C-terminus: Protein Wnt-7a (349 aa).

The N-terminal stretch at 1–31 (MNRKARRCLGHLFLSLGMVYLRIGGFSTVVA) is a signal peptide. 5 cysteine pairs are disulfide-bonded: C73–C84, C123–C131, C133–C152, C200–C214, and C202–C209. N-linked (GlcNAc...) asparagine glycans are attached at residues N83 and N127. S206 carries O-palmitoleoyl serine; by PORCN lipidation. Positions 238 to 266 (VEPVRASRNKRPTFLKIKKPLSYRKPMDT) are disordered linker. Cystine bridges form between C278–C309, C294–C304, C308–C348, C324–C339, C326–C336, and C331–C332. The N-linked (GlcNAc...) asparagine glycan is linked to N295.

The protein belongs to the Wnt family. In terms of assembly, forms a soluble 1:1 complex with AFM; this prevents oligomerization and is required for prolonged biological activity. The complex with AFM may represent the physiological form in body fluids. Interacts with PORCN. Interacts (via intrinsically disordered linker region) with RECK; interaction with RECK confers ligand selectivity for Wnt7 in brain endothelial cells and allows these cells to selectively respond to Wnt7. Interacts with FZD5. Palmitoleoylation is required for efficient binding to frizzled receptors. Depalmitoleoylation leads to Wnt signaling pathway inhibition.

It is found in the secreted. The protein resides in the extracellular space. Its subcellular location is the extracellular matrix. In terms of biological role, ligand for members of the frizzled family of seven transmembrane receptors that functions in the canonical Wnt/beta-catenin signaling pathway. Plays an important role in embryonic development, including dorsal versus ventral patterning during limb development, skeleton development and urogenital tract development. Required for central nervous system (CNS) angiogenesis and blood-brain barrier regulation. Required for normal, sexually dimorphic development of the Mullerian ducts, and for normal fertility in both sexes. Required for normal neural stem cell proliferation in the hippocampus dentate gyrus. Required for normal progress through the cell cycle in neural progenitor cells, for self-renewal of neural stem cells, and for normal neuronal differentiation and maturation. Promotes formation of synapses via its interaction with FZD5. This chain is Protein Wnt-7a (WNT7A), found in Chlorocebus aethiops (Green monkey).